The chain runs to 323 residues: Small ribosomal subunit protein mS35 (323 aa).

The interval 31–59 (PVPTPSLPERTPGNERPPRRKALPPRTEK) is disordered. Positions 257–321 (SSERNILETL…YKESVKRLLN (65 aa)) form a coiled coil.

Belongs to the mitochondrion-specific ribosomal protein mS35 family. Component of the mitochondrial small ribosomal subunit (mt-SSU). Mature mammalian 55S mitochondrial ribosomes consist of a small (28S) and a large (39S) subunit. The 28S small subunit contains a 12S ribosomal RNA (12S mt-rRNA) and 30 different proteins. The 39S large subunit contains a 16S rRNA (16S mt-rRNA), a copy of mitochondrial valine transfer RNA (mt-tRNA(Val)), which plays an integral structural role, and 52 different proteins.

It localises to the mitochondrion. The protein is Small ribosomal subunit protein mS35 of Homo sapiens (Human).